Consider the following 287-residue polypeptide: RNA polymerase sigma factor RpoH (287 aa).

A sigma-70 factor domain-2 region spans residues 54–123 (LILSHLRFVI…IHEYVLRNWR (70 aa)). Residues 78–81 (DLIQ) carry the Interaction with polymerase core subunit RpoC motif. Residues 230–283 (ALSSLDERSRNIIHARWLDDSDHKMTLREIAHNYGISAERVRQLEKNAMKKLKV) are sigma-70 factor domain-4. Positions 256 to 275 (LREIAHNYGISAERVRQLEK) form a DNA-binding region, H-T-H motif.

The protein belongs to the sigma-70 factor family. RpoH subfamily. As to quaternary structure, interacts with the RNA polymerase core enzyme.

Its subcellular location is the cytoplasm. In terms of biological role, sigma factors are initiation factors that promote the attachment of RNA polymerase to specific initiation sites and are then released. This sigma factor is involved in regulation of expression of heat shock genes. This is RNA polymerase sigma factor RpoH from Buchnera aphidicola subsp. Baizongia pistaciae (strain Bp).